The primary structure comprises 179 residues: SCAN domain-containing protein 1 (179 aa).

Residues 1-107 (MAATEPILAT…AGSRLGPETF (107 aa)) are disordered. Over residues 52–80 (SPNAAVPEAIPTPRAAASAALELPLGPAP) the composition is skewed to low complexity. The region spanning 108–166 (RQRFRQFRYQDAAGPREAFRQLRELSRQWLRPDIRTKEQIVEMLVQEQLLAILPEAARA) is the SCAN box domain.

As to quaternary structure, interacts with ZNF202.

The protein localises to the nucleus. May regulate transcriptional activity. The chain is SCAN domain-containing protein 1 (SCAND1) from Pan paniscus (Pygmy chimpanzee).